A 228-amino-acid chain; its full sequence is 2,3-bisphosphoglycerate-dependent phosphoglycerate mutase (228 aa).

Substrate contacts are provided by residues Arg8–Asn15, Thr21–Gly22, Arg60, Glu87–Tyr90, Lys98, Arg114–Arg115, and Gly180–Asn181. His9 (tele-phosphohistidine intermediate) is an active-site residue. Glu87 acts as the Proton donor/acceptor in catalysis.

Belongs to the phosphoglycerate mutase family. BPG-dependent PGAM subfamily. Homodimer.

It carries out the reaction (2R)-2-phosphoglycerate = (2R)-3-phosphoglycerate. It functions in the pathway carbohydrate degradation; glycolysis; pyruvate from D-glyceraldehyde 3-phosphate: step 3/5. Functionally, catalyzes the interconversion of 2-phosphoglycerate and 3-phosphoglycerate. This chain is 2,3-bisphosphoglycerate-dependent phosphoglycerate mutase, found in Sphingopyxis alaskensis (strain DSM 13593 / LMG 18877 / RB2256) (Sphingomonas alaskensis).